Reading from the N-terminus, the 288-residue chain is Diaminopimelate epimerase (288 aa).

Substrate-binding residues include Asn13, Gln46, and Asn66. Cys75 functions as the Proton donor in the catalytic mechanism. Substrate-binding positions include 76 to 77, Asn166, Asn199, and 217 to 218; these read GN and ER. The active-site Proton acceptor is the Cys226. A substrate-binding site is contributed by 227-228; that stretch reads GT.

It belongs to the diaminopimelate epimerase family. Homodimer.

It is found in the cytoplasm. The enzyme catalyses (2S,6S)-2,6-diaminopimelate = meso-2,6-diaminopimelate. The protein operates within amino-acid biosynthesis; L-lysine biosynthesis via DAP pathway; DL-2,6-diaminopimelate from LL-2,6-diaminopimelate: step 1/1. Its function is as follows. Catalyzes the stereoinversion of LL-2,6-diaminopimelate (L,L-DAP) to meso-diaminopimelate (meso-DAP), a precursor of L-lysine and an essential component of the bacterial peptidoglycan. This chain is Diaminopimelate epimerase, found in Cupriavidus taiwanensis (strain DSM 17343 / BCRC 17206 / CCUG 44338 / CIP 107171 / LMG 19424 / R1) (Ralstonia taiwanensis (strain LMG 19424)).